The sequence spans 124 residues: Aspartate 1-decarboxylase (124 aa).

Ser25 acts as the Schiff-base intermediate with substrate; via pyruvic acid in catalysis. Position 25 is a pyruvic acid (Ser) (Ser25). Residue Thr57 coordinates substrate. The active-site Proton donor is the Tyr58. Residue 71–73 participates in substrate binding; the sequence is GAA.

This sequence belongs to the PanD family. Heterooctamer of four alpha and four beta subunits. Requires pyruvate as cofactor. In terms of processing, is synthesized initially as an inactive proenzyme, which is activated by self-cleavage at a specific serine bond to produce a beta-subunit with a hydroxyl group at its C-terminus and an alpha-subunit with a pyruvoyl group at its N-terminus.

It localises to the cytoplasm. The catalysed reaction is L-aspartate + H(+) = beta-alanine + CO2. It participates in cofactor biosynthesis; (R)-pantothenate biosynthesis; beta-alanine from L-aspartate: step 1/1. Functionally, catalyzes the pyruvoyl-dependent decarboxylation of aspartate to produce beta-alanine. The polypeptide is Aspartate 1-decarboxylase (Bdellovibrio bacteriovorus (strain ATCC 15356 / DSM 50701 / NCIMB 9529 / HD100)).